The primary structure comprises 32 residues: Defensin-3 (32 aa).

3 cysteine pairs are disulfide-bonded: Cys3–Cys31, Cys5–Cys20, and Cys10–Cys30.

The protein resides in the secreted. In terms of biological role, has antibacterial activity against the Gram-negative bacterium E.coli and the Gram-positive bacteria L.monocytogenes and S.aureus. Has antifungal activity against C.albicans. The chain is Defensin-3 from Papio hamadryas (Hamadryas baboon).